The chain runs to 287 residues: Beta-lactamase GES-2 (287 aa).

The signal sequence occupies residues 1–18 (MRFIHALLLAGIAHSAYA). A disulfide bridge connects residues Cys63 and Cys233. Ser64 functions as the Nucleophile; acyl-ester intermediate in the catalytic mechanism. Positions 67, 125, and 161 each coordinate a beta-lactam.

It belongs to the class-A beta-lactamase family.

The enzyme catalyses a beta-lactam + H2O = a substituted beta-amino acid. With respect to regulation, inhibited by the beta-lactamase-blocking agents clavulanic acid, sulbactam and tazobactam. Extended-spectrum beta-lactamase (ESBL) which confers resistance to penicillins, as well as first, third and fourth-generation cephalosporins. Has modest carbapenem-hydrolyzing activity. Has cefotaxime-hydrolyzing activity. This Pseudomonas aeruginosa protein is Beta-lactamase GES-2.